Here is a 333-residue protein sequence, read N- to C-terminus: Ubiquinol oxidase 2, mitochondrial (333 aa).

A helical membrane pass occupies residues 158–178 (AMMLETVAAVPGMVGGMLLHL). Fe cation contacts are provided by E162, E201, and H204. Residues 220-240 (LLVLAVQGVFFNAFFVLYILS) form a helical membrane-spanning segment. 3 residues coordinate Fe cation: E252, E303, and H306.

The protein belongs to the alternative oxidase family. In terms of assembly, homodimer; disulfide-linked. The cofactor is Fe cation.

It is found in the mitochondrion inner membrane. The enzyme catalyses 2 a ubiquinol + O2 = 2 a ubiquinone + 2 H2O. Its function is as follows. Catalyzes the cyanide-resistant oxidation of ubiquinol and the reduction of molecular oxygen to water, but does not translocate protons and consequently is not linked to oxidative phosphorylation. May increase respiration when the cytochrome respiratory pathway is restricted, or in response to low temperatures. The chain is Ubiquinol oxidase 2, mitochondrial (AOX2) from Glycine max (Soybean).